We begin with the raw amino-acid sequence, 243 residues long: Probable transcriptional regulatory protein BPP2422 (243 aa).

Residues 1-21 (MAGHSKWANIQHRKGRQDAKR) form a disordered region.

This sequence belongs to the TACO1 family.

The protein localises to the cytoplasm. This is Probable transcriptional regulatory protein BPP2422 from Bordetella parapertussis (strain 12822 / ATCC BAA-587 / NCTC 13253).